We begin with the raw amino-acid sequence, 154 residues long: Iron-sulfur cluster assembly 2 homolog, mitochondrial (154 aa).

The transit peptide at 1 to 8 directs the protein to the mitochondrion; it reads MAASRALS. Positions 79, 144, and 146 each coordinate Fe cation.

This sequence belongs to the HesB/IscA family. As to quaternary structure, heterotetramer; forms a dimer of dimers with IBA57. Interacts with [2Fe-2S]-ISCA2 forming the heterodimer [2Fe- 2S]-ISCA2-IBA57 complex; [2Fe-2S] cluster binding is absolutely required to promote the complex formation.

It localises to the mitochondrion. Involved in the maturation of mitochondrial 4Fe-4S proteins functioning late in the iron-sulfur cluster assembly pathway. May be involved in the binding of an intermediate of Fe/S cluster assembly. The sequence is that of Iron-sulfur cluster assembly 2 homolog, mitochondrial (Isca2) from Mus musculus (Mouse).